We begin with the raw amino-acid sequence, 61 residues long: Small ribosomal subunit protein uS14 (61 aa).

4 residues coordinate Zn(2+): cysteine 24, cysteine 27, cysteine 40, and cysteine 43.

It belongs to the universal ribosomal protein uS14 family. Zinc-binding uS14 subfamily. In terms of assembly, part of the 30S ribosomal subunit. Contacts proteins S3 and S10. Zn(2+) is required as a cofactor.

Its function is as follows. Binds 16S rRNA, required for the assembly of 30S particles and may also be responsible for determining the conformation of the 16S rRNA at the A site. The protein is Small ribosomal subunit protein uS14 of Mycobacterium sp. (strain JLS).